Reading from the N-terminus, the 248-residue chain is Polyhedrin (248 aa).

A signal peptide spans 1–27 (MADVAGTSNRDFRGREQRLFNSEQYNY). Asn-28, Asn-77, Asn-86, and Asn-237 each carry an N-linked (GlcNAc...) asparagine; by host glycan.

It localises to the host cytoplasm. Functionally, major component of the virus occlusion bodies, which are large proteinaceous structures (polyhedra), that protect the virus from the outside environment for extended periods until they are ingested by insect larvae. In Bombyx mori cytoplasmic polyhedrosis virus (BmCPV), this protein is Polyhedrin.